A 356-amino-acid chain; its full sequence is S-adenosylmethionine:tRNA ribosyltransferase-isomerase (356 aa).

Belongs to the QueA family. As to quaternary structure, monomer.

The protein localises to the cytoplasm. It carries out the reaction 7-aminomethyl-7-carbaguanosine(34) in tRNA + S-adenosyl-L-methionine = epoxyqueuosine(34) in tRNA + adenine + L-methionine + 2 H(+). It functions in the pathway tRNA modification; tRNA-queuosine biosynthesis. In terms of biological role, transfers and isomerizes the ribose moiety from AdoMet to the 7-aminomethyl group of 7-deazaguanine (preQ1-tRNA) to give epoxyqueuosine (oQ-tRNA). The chain is S-adenosylmethionine:tRNA ribosyltransferase-isomerase from Escherichia fergusonii (strain ATCC 35469 / DSM 13698 / CCUG 18766 / IAM 14443 / JCM 21226 / LMG 7866 / NBRC 102419 / NCTC 12128 / CDC 0568-73).